Reading from the N-terminus, the 331-residue chain is Ferredoxin--NADP reductase (331 aa).

FAD-binding residues include Glu38, Gln46, Tyr51, Ala91, Leu125, Asp282, and Ser323.

The protein belongs to the ferredoxin--NADP reductase type 2 family. In terms of assembly, homodimer. FAD is required as a cofactor.

It carries out the reaction 2 reduced [2Fe-2S]-[ferredoxin] + NADP(+) + H(+) = 2 oxidized [2Fe-2S]-[ferredoxin] + NADPH. The polypeptide is Ferredoxin--NADP reductase (Deinococcus geothermalis (strain DSM 11300 / CIP 105573 / AG-3a)).